Consider the following 571-residue polypeptide: Calcium-dependent protein kinase 16 (571 aa).

The segment at 1–74 (MGLCFSSAAK…TRHTPPHGKV (74 aa)) is disordered. Glycine 2 is lipidated: N-myristoyl glycine. Cysteine 4 is lipidated: S-palmitoyl cysteine. Over residues 63–72 (TPTRHTPPHG) the composition is skewed to basic residues. Positions 108–368 (YTIGKLLGHG…AAQALSHPWV (261 aa)) constitute a Protein kinase domain. Residues 114 to 122 (LGHGQFGYT) and lysine 137 contribute to the ATP site. Aspartate 234 acts as the Proton acceptor in catalysis. At serine 274 the chain carries Phosphoserine. An autoinhibitory domain region spans residues 374–404 (ASEIPIDISVLNNMRQFVKFSRLKQFALRAL). EF-hand domains follow at residues 411–446 (EELA…DHPW), 448–483 (LKDA…VNQL), 490–525 (KWQQ…KGSI), and 528–555 (LLEE…ASIK). Residues aspartate 424, aspartate 426, asparagine 428, glutamate 435, aspartate 461, asparagine 463, aspartate 465, glutamate 472, aspartate 503, aspartate 505, aspartate 507, glutamate 514, aspartate 533, aspartate 535, aspartate 537, and lysine 539 each contribute to the Ca(2+) site. A Phosphoserine modification is found at serine 541. Glutamate 544 lines the Ca(2+) pocket.

The protein belongs to the protein kinase superfamily. Ser/Thr protein kinase family. CDPK subfamily.

It localises to the cell membrane. The protein resides in the nucleus. It catalyses the reaction L-seryl-[protein] + ATP = O-phospho-L-seryl-[protein] + ADP + H(+). The catalysed reaction is L-threonyl-[protein] + ATP = O-phospho-L-threonyl-[protein] + ADP + H(+). Activated by calcium. Autophosphorylation may play an important role in the regulation of the kinase activity. May play a role in signal transduction pathways that involve calcium as a second messenger. This Arabidopsis thaliana (Mouse-ear cress) protein is Calcium-dependent protein kinase 16 (CPK16).